A 231-amino-acid chain; its full sequence is Hypoxanthine-guanine-xanthine phosphoribosyltransferase (231 aa).

GMP is bound by residues lysine 77, 144–152 (EDIIDTGKT), lysine 176, and aspartate 204. Aspartate 148 (proton acceptor) is an active-site residue. A Mg(2+)-binding site is contributed by aspartate 204.

Belongs to the purine/pyrimidine phosphoribosyltransferase family. As to quaternary structure, homotetramer. Requires Mg(2+) as cofactor.

It localises to the cytoplasm. It catalyses the reaction IMP + diphosphate = hypoxanthine + 5-phospho-alpha-D-ribose 1-diphosphate. The enzyme catalyses GMP + diphosphate = guanine + 5-phospho-alpha-D-ribose 1-diphosphate. The catalysed reaction is XMP + diphosphate = xanthine + 5-phospho-alpha-D-ribose 1-diphosphate. It functions in the pathway purine metabolism; GMP biosynthesis via salvage pathway; GMP from guanine: step 1/1. Its pathway is purine metabolism; IMP biosynthesis via salvage pathway; IMP from hypoxanthine: step 1/1. It participates in purine metabolism; XMP biosynthesis via salvage pathway; XMP from xanthine: step 1/1. Functionally, catalyzes the transfer of a ribosyl phosphate group from 5-phosphoribose 1-diphosphate to the N(9) of hypoxanthine, guanine or xanthine, leading to IMP, GMP and XMP, respectively. Plays a central role in the generation of purine nucleotides through the purine salvage pathway. In Plasmodium falciparum (isolate K1 / Thailand), this protein is Hypoxanthine-guanine-xanthine phosphoribosyltransferase (LACZ).